Reading from the N-terminus, the 118-residue chain is uncharacterized protein (118 aa).

A disordered region spans residues 98 to 118 (KGKGNEGREEAEEPLEEPEEG). A compositionally biased stretch (acidic residues) spans 106–118 (EEAEEPLEEPEEG).

It belongs to the UPF0440 family.

This is an uncharacterized protein from Pyrococcus abyssi (strain GE5 / Orsay).